A 218-amino-acid chain; its full sequence is Probable transaldolase (218 aa).

The Schiff-base intermediate with substrate role is filled by lysine 83.

Belongs to the transaldolase family. Type 3B subfamily.

The protein localises to the cytoplasm. The catalysed reaction is D-sedoheptulose 7-phosphate + D-glyceraldehyde 3-phosphate = D-erythrose 4-phosphate + beta-D-fructose 6-phosphate. The protein operates within carbohydrate degradation; pentose phosphate pathway; D-glyceraldehyde 3-phosphate and beta-D-fructose 6-phosphate from D-ribose 5-phosphate and D-xylulose 5-phosphate (non-oxidative stage): step 2/3. Its function is as follows. Transaldolase is important for the balance of metabolites in the pentose-phosphate pathway. The sequence is that of Probable transaldolase from Thermotoga sp. (strain RQ2).